The primary structure comprises 279 residues: Probable endonuclease 4 (279 aa).

Residues H67, H107, E144, D177, H180, H214, D227, H229, and E259 each coordinate Zn(2+).

This sequence belongs to the AP endonuclease 2 family. Requires Zn(2+) as cofactor.

It carries out the reaction Endonucleolytic cleavage to 5'-phosphooligonucleotide end-products.. Endonuclease IV plays a role in DNA repair. It cleaves phosphodiester bonds at apurinic or apyrimidinic (AP) sites, generating a 3'-hydroxyl group and a 5'-terminal sugar phosphate. The polypeptide is Probable endonuclease 4 (Sulfurihydrogenibium sp. (strain YO3AOP1)).